We begin with the raw amino-acid sequence, 637 residues long: Probable potassium transport system protein Kup (637 aa).

Helical transmembrane passes span 24–44 (LAIA…LYAL), 64–84 (VISL…LLFV), 113–133 (AGAL…DAVI), 151–171 (PHLS…LFWI), 182–202 (LFGP…VYHI), 225–245 (LLQA…AEAL), 261–281 (AYGL…ALLI), 290–310 (PFFL…STVA), 351–371 (IYVP…VIGF), 381–401 (YGIA…VVMV), 409–429 (LLVG…FGAN), and 433–453 (VAQG…LLMT).

The protein belongs to the HAK/KUP transporter (TC 2.A.72) family.

Its subcellular location is the cell inner membrane. It catalyses the reaction K(+)(in) + H(+)(in) = K(+)(out) + H(+)(out). Its function is as follows. Transport of potassium into the cell. Likely operates as a K(+):H(+) symporter. In Burkholderia ambifaria (strain ATCC BAA-244 / DSM 16087 / CCUG 44356 / LMG 19182 / AMMD) (Burkholderia cepacia (strain AMMD)), this protein is Probable potassium transport system protein Kup.